Consider the following 319-residue polypeptide: uncharacterized protein (319 aa).

The segment at 281–319 (KVERKQRRRDDQNIMRSKLPQQRQNPFCSTERPKRARCD) is disordered. Positions 299–308 (LPQQRQNPFC) are enriched in polar residues.

The protein resides in the cytoplasm. The protein localises to the nucleus. This is an uncharacterized protein from Saccharomyces cerevisiae (strain ATCC 204508 / S288c) (Baker's yeast).